A 116-amino-acid chain; its full sequence is HVA22-like protein e (116 aa).

Transmembrane regions (helical) follow at residues 12-32 (HSLA…VIAI), 42-62 (QWLA…ILQS), and 63-83 (LLEW…WLVL).

It belongs to the DP1 family. As to expression, predominantly expressed in stem.

Its subcellular location is the membrane. This is HVA22-like protein e (HVA22E) from Arabidopsis thaliana (Mouse-ear cress).